A 195-amino-acid polypeptide reads, in one-letter code: dCTP deaminase (195 aa).

Residues 110–115 (RSSLAR), D128, 136–138 (VLE), Y171, K178, and Q182 contribute to the dCTP site. The active-site Proton donor/acceptor is the E138. The segment at 171–195 (YSSRKDAKYKNQQSAVASRIDEDKE) is disordered.

Belongs to the dCTP deaminase family. In terms of assembly, homotrimer.

The catalysed reaction is dCTP + H2O + H(+) = dUTP + NH4(+). It functions in the pathway pyrimidine metabolism; dUMP biosynthesis; dUMP from dCTP (dUTP route): step 1/2. In terms of biological role, catalyzes the deamination of dCTP to dUTP. This is dCTP deaminase from Haemophilus influenzae (strain ATCC 51907 / DSM 11121 / KW20 / Rd).